Reading from the N-terminus, the 160-residue chain is Small ribosomal subunit protein uS7 (160 aa).

Belongs to the universal ribosomal protein uS7 family. As to quaternary structure, part of the 30S ribosomal subunit. Contacts proteins S9 and S11.

Functionally, one of the primary rRNA binding proteins, it binds directly to 16S rRNA where it nucleates assembly of the head domain of the 30S subunit. Is located at the subunit interface close to the decoding center, probably blocks exit of the E-site tRNA. The protein is Small ribosomal subunit protein uS7 of Anaplasma phagocytophilum (strain HZ).